Here is a 239-residue protein sequence, read N- to C-terminus: MNIEEFISSLAEKGISLSDRQLEQFELYYRMLVEWNEKMNLTSITEKKDVYLKHFYDSITAAFYIDFEKVTTLCDVGAGAGFPSLPIKICFPHLHVTIVDSLNKRITFLETLSDALQLEHTSFVHDRAETFGQRKDVRESFDLVTARAVARLSVLSELCLPLAKKNGVFAALKAAAADEELKAGQKAIKVLGGELEQVHSFTLPVEESERNIMIIRKTKSTPKKYPRKPGTPNKSPIEG.

Residues Gly-77, Phe-82, 128 to 129 (AE), and Arg-147 contribute to the S-adenosyl-L-methionine site. Residues 215 to 239 (IRKTKSTPKKYPRKPGTPNKSPIEG) are disordered. Residues 216–227 (RKTKSTPKKYPR) show a composition bias toward basic residues.

It belongs to the methyltransferase superfamily. RNA methyltransferase RsmG family.

The protein resides in the cytoplasm. Specifically methylates the N7 position of guanine in position 535 of 16S rRNA. In Bacillus velezensis (strain DSM 23117 / BGSC 10A6 / LMG 26770 / FZB42) (Bacillus amyloliquefaciens subsp. plantarum), this protein is Ribosomal RNA small subunit methyltransferase G.